The following is a 247-amino-acid chain: Carboxy-S-adenosyl-L-methionine synthase (247 aa).

Residues Tyr-39, 64 to 66, 89 to 90, 117 to 118, Asn-132, and Arg-199 each bind S-adenosyl-L-methionine; these read GCS, DN, and DI.

The protein belongs to the class I-like SAM-binding methyltransferase superfamily. Cx-SAM synthase family. As to quaternary structure, homodimer.

It catalyses the reaction prephenate + S-adenosyl-L-methionine = carboxy-S-adenosyl-L-methionine + 3-phenylpyruvate + H2O. Its function is as follows. Catalyzes the conversion of S-adenosyl-L-methionine (SAM) to carboxy-S-adenosyl-L-methionine (Cx-SAM). The chain is Carboxy-S-adenosyl-L-methionine synthase from Salmonella agona (strain SL483).